The chain runs to 217 residues: tRNA (guanine-N(7)-)-methyltransferase (217 aa).

S-adenosyl-L-methionine-binding residues include Glu-44, Glu-69, Asp-96, and Asp-118. The active site involves Asp-118. Substrate is bound by residues Lys-122, Asp-154, and Thr-191 to Glu-194.

The protein belongs to the class I-like SAM-binding methyltransferase superfamily. TrmB family.

It carries out the reaction guanosine(46) in tRNA + S-adenosyl-L-methionine = N(7)-methylguanosine(46) in tRNA + S-adenosyl-L-homocysteine. It participates in tRNA modification; N(7)-methylguanine-tRNA biosynthesis. Its function is as follows. Catalyzes the formation of N(7)-methylguanine at position 46 (m7G46) in tRNA. The polypeptide is tRNA (guanine-N(7)-)-methyltransferase (Bacillus mycoides (strain KBAB4) (Bacillus weihenstephanensis)).